A 302-amino-acid polypeptide reads, in one-letter code: Small ribosomal subunit biogenesis GTPase RsgA (302 aa).

A CP-type G domain is found at K69 to V229. GTP-binding positions include N118 to D121 and G172 to S180. C252, C257, H259, and C265 together coordinate Zn(2+).

The protein belongs to the TRAFAC class YlqF/YawG GTPase family. RsgA subfamily. Monomer. Associates with 30S ribosomal subunit, binds 16S rRNA. It depends on Zn(2+) as a cofactor.

Its subcellular location is the cytoplasm. One of several proteins that assist in the late maturation steps of the functional core of the 30S ribosomal subunit. Helps release RbfA from mature subunits. May play a role in the assembly of ribosomal proteins into the subunit. Circularly permuted GTPase that catalyzes slow GTP hydrolysis, GTPase activity is stimulated by the 30S ribosomal subunit. This chain is Small ribosomal subunit biogenesis GTPase RsgA, found in Aquifex aeolicus (strain VF5).